The chain runs to 531 residues: uncharacterized protein (531 aa).

An N-terminal signal peptide occupies residues 1–28; sequence MNTKGIIAKLTAGALIANLLICPANTLA. SLH domains follow at residues 29–85, 86–149, and 150–210; these read EKKT…QINK, QAKP…IGDL, and PTQF…SKRM. The region spanning 335-517 is the MurNAc-LAA domain; it reads IIIDPGHGGI…AAEAIYAGIL (183 aa).

It in the C-terminal section; belongs to the N-acetylmuramoyl-L-alanine amidase 3 family.

The protein localises to the secreted. It is found in the cell wall. The protein resides in the S-layer. This is an uncharacterized protein from Bacillus anthracis.